The sequence spans 177 residues: Protein-export protein SecB (177 aa).

Belongs to the SecB family. As to quaternary structure, homotetramer, a dimer of dimers. One homotetramer interacts with 1 SecA dimer.

The protein resides in the cytoplasm. One of the proteins required for the normal export of preproteins out of the cell cytoplasm. It is a molecular chaperone that binds to a subset of precursor proteins, maintaining them in a translocation-competent state. It also specifically binds to its receptor SecA. This Ehrlichia canis (strain Jake) protein is Protein-export protein SecB.